The chain runs to 195 residues: Interferon tau-9 (195 aa).

The first 23 residues, 1–23 (MAFVLSLLMALVLVSYGPGGSLG), serve as a signal peptide directing secretion. 2 cysteine pairs are disulfide-bonded: cysteine 24/cysteine 122 and cysteine 52/cysteine 162.

It belongs to the alpha/beta interferon family. IFN-alphaII subfamily. As to expression, constitutively and exclusively expressed in the mononuclear cells of the extraembryonic trophectoderm.

The protein localises to the secreted. In terms of biological role, paracrine hormone primarily responsible for maternal recognition of pregnancy. Interacts with endometrial receptors, probably type I interferon receptors, and blocks estrogen receptor expression, preventing the estrogen-induced increase in oxytocin receptor expression in the endometrium. This results in the suppression of the pulsatile endometrial release of the luteolytic hormone prostaglandin F2-alpha, hindering the regression of the corpus luteum (luteolysis) and therefore a return to ovarian cyclicity. This, and a possible direct effect of IFN-tau on prostaglandin synthesis, leads in turn to continued ovarian progesterone secretion, which stimulates the secretion by the endometrium of the nutrients required for the growth of the conceptus. In summary, displays particularly high antiviral and antiproliferative potency concurrently with particular weak cytotoxicity, high antiluteolytic activity and immunomodulatory properties. In contrast with other IFNs, IFN-tau is not virally inducible. The sequence is that of Interferon tau-9 (IFNT9) from Ovis aries (Sheep).